We begin with the raw amino-acid sequence, 463 residues long: A-type ATP synthase subunit B (463 aa).

It belongs to the ATPase alpha/beta chains family. As to quaternary structure, has multiple subunits with at least A(3), B(3), C, D, E, F, H, I and proteolipid K(x).

The protein resides in the cell membrane. Component of the A-type ATP synthase that produces ATP from ADP in the presence of a proton gradient across the membrane. The B chain is a regulatory subunit. The protein is A-type ATP synthase subunit B of Aeropyrum pernix (strain ATCC 700893 / DSM 11879 / JCM 9820 / NBRC 100138 / K1).